Consider the following 206-residue polypeptide: A-type ATP synthase subunit E (206 aa).

The protein belongs to the V-ATPase E subunit family. As to quaternary structure, has multiple subunits with at least A(3), B(3), C, D, E, F, H, I and proteolipid K(x).

It localises to the cell membrane. Functionally, component of the A-type ATP synthase that produces ATP from ADP in the presence of a proton gradient across the membrane. This Methanothermobacter thermautotrophicus (strain ATCC 29096 / DSM 1053 / JCM 10044 / NBRC 100330 / Delta H) (Methanobacterium thermoautotrophicum) protein is A-type ATP synthase subunit E.